We begin with the raw amino-acid sequence, 308 residues long: Lipoyl synthase (308 aa).

7 residues coordinate [4Fe-4S] cluster: cysteine 51, cysteine 56, cysteine 62, cysteine 77, cysteine 81, cysteine 84, and serine 290. The Radical SAM core domain maps to 63-279 (WSKRHATFMI…ETIAKSKGFL (217 aa)).

It belongs to the radical SAM superfamily. Lipoyl synthase family. [4Fe-4S] cluster is required as a cofactor.

Its subcellular location is the cytoplasm. It carries out the reaction [[Fe-S] cluster scaffold protein carrying a second [4Fe-4S](2+) cluster] + N(6)-octanoyl-L-lysyl-[protein] + 2 oxidized [2Fe-2S]-[ferredoxin] + 2 S-adenosyl-L-methionine + 4 H(+) = [[Fe-S] cluster scaffold protein] + N(6)-[(R)-dihydrolipoyl]-L-lysyl-[protein] + 4 Fe(3+) + 2 hydrogen sulfide + 2 5'-deoxyadenosine + 2 L-methionine + 2 reduced [2Fe-2S]-[ferredoxin]. Its pathway is protein modification; protein lipoylation via endogenous pathway; protein N(6)-(lipoyl)lysine from octanoyl-[acyl-carrier-protein]: step 2/2. Functionally, catalyzes the radical-mediated insertion of two sulfur atoms into the C-6 and C-8 positions of the octanoyl moiety bound to the lipoyl domains of lipoate-dependent enzymes, thereby converting the octanoylated domains into lipoylated derivatives. The protein is Lipoyl synthase of Pelagibacter ubique (strain HTCC1062).